A 316-amino-acid polypeptide reads, in one-letter code: Ribosomal RNA large subunit methyltransferase F (316 aa).

The protein belongs to the methyltransferase superfamily. METTL16/RlmF family.

It is found in the cytoplasm. The catalysed reaction is adenosine(1618) in 23S rRNA + S-adenosyl-L-methionine = N(6)-methyladenosine(1618) in 23S rRNA + S-adenosyl-L-homocysteine + H(+). Functionally, specifically methylates the adenine in position 1618 of 23S rRNA. The polypeptide is Ribosomal RNA large subunit methyltransferase F (Pseudomonas putida (strain GB-1)).